The following is a 254-amino-acid chain: Fasciclin-like arabinogalactan protein 7 (254 aa).

An N-terminal signal peptide occupies residues 1–22; sequence MAKMQLSIFIAVVALIVCSASA. Residues 44 to 186 enclose the FAS1 domain; that stretch reads NVNLTELLSV…VAVYQVNRVL (143 aa). 4 N-linked (GlcNAc...) asparagine glycosylation sites follow: Asn46, Asn78, Asn104, and Asn130. The interval 203–233 is disordered; that stretch reads APAPIVSAPSDSPSVADSEGASSPKSSHKNS. A compositionally biased stretch (low complexity) spans 206-220; the sequence is PIVSAPSDSPSVADS. The span at 222–233 shows a compositional bias: polar residues; sequence GASSPKSSHKNS. Residue Asn232 is the site of GPI-anchor amidated asparagine attachment. Positions 233-254 are cleaved as a propeptide — removed in mature form; sequence SGQKLLLAPISMVISGLVALFL.

It belongs to the fasciclin-like AGP family.

It is found in the cell membrane. Functionally, may be a cell surface adhesion protein. This is Fasciclin-like arabinogalactan protein 7 (FLA7) from Arabidopsis thaliana (Mouse-ear cress).